A 124-amino-acid polypeptide reads, in one-letter code: uncharacterized protein (124 aa).

The first 21 residues, 1 to 21 (MFLLSLLHFFHPSLIPSLSLS), serve as a signal peptide directing secretion.

This is an uncharacterized protein from Schizosaccharomyces pombe (strain 972 / ATCC 24843) (Fission yeast).